A 105-amino-acid polypeptide reads, in one-letter code: MKVHKGDTVLVISGKDKGAKGKVLQAYPDRNRVLVEGVNRIKKHTAISTTQRGARSGGIVTQEAPIHVSNVMVVDSDGKPTRIGYRVDEETGKRVRISKRNGKDI.

It belongs to the universal ribosomal protein uL24 family. In terms of assembly, part of the 50S ribosomal subunit.

One of two assembly initiator proteins, it binds directly to the 5'-end of the 23S rRNA, where it nucleates assembly of the 50S subunit. Functionally, one of the proteins that surrounds the polypeptide exit tunnel on the outside of the subunit. The chain is Large ribosomal subunit protein uL24 from Mycobacterium tuberculosis (strain CDC 1551 / Oshkosh).